Consider the following 211-residue polypeptide: ATP phosphoribosyltransferase (211 aa).

This sequence belongs to the ATP phosphoribosyltransferase family. Short subfamily. In terms of assembly, heteromultimer composed of HisG and HisZ subunits.

The protein localises to the cytoplasm. The enzyme catalyses 1-(5-phospho-beta-D-ribosyl)-ATP + diphosphate = 5-phospho-alpha-D-ribose 1-diphosphate + ATP. It functions in the pathway amino-acid biosynthesis; L-histidine biosynthesis; L-histidine from 5-phospho-alpha-D-ribose 1-diphosphate: step 1/9. Its function is as follows. Catalyzes the condensation of ATP and 5-phosphoribose 1-diphosphate to form N'-(5'-phosphoribosyl)-ATP (PR-ATP). Has a crucial role in the pathway because the rate of histidine biosynthesis seems to be controlled primarily by regulation of HisG enzymatic activity. In Pseudomonas savastanoi pv. phaseolicola (strain 1448A / Race 6) (Pseudomonas syringae pv. phaseolicola (strain 1448A / Race 6)), this protein is ATP phosphoribosyltransferase.